Here is a 352-residue protein sequence, read N- to C-terminus: RNA-binding protein lark (352 aa).

RRM domains lie at 7–77 (FKLF…AAKS) and 86–156 (TKIF…VSTS). The segment at 168–185 (EQCYRCGRSGHWSKECPR) adopts a CCHC-type zinc-finger fold. Disordered regions lie at residues 187–228 (YGSA…LRDR) and 254–352 (YQTS…YAPY). Ser-198 and Ser-201 each carry phosphoserine. 2 stretches are compositionally biased toward pro residues: residues 214–224 (PYPPPPPPPPF) and 262–277 (FPPP…PLPP). Residues 279 to 288 (LSGSLRSCSV) show a composition bias toward polar residues. Residues Ser-315 and Ser-325 each carry the phosphoserine modification. A compositionally biased stretch (basic and acidic residues) spans 320-334 (GYEDFSRDAFDERMI).

Expressed in the CNS and in CCAP neurons of the ventral nervous system (VNS), which control insect ecdysis.

The protein localises to the cytoplasm. The protein resides in the nucleus. In terms of biological role, essential RNA-binding protein. May be required for circadian repression of eclosion. Also essential for nurse cell dumping during oogenesis, the process whereby the cytoplasmic contents of nurse cells are transferred to the oocyte late in it's development. In Drosophila melanogaster (Fruit fly), this protein is RNA-binding protein lark (lark).